The chain runs to 406 residues: Calsequestrin-1 (406 aa).

An N-terminal signal peptide occupies residues 1-34 (MRATDRMGARAVSKLRLALLFVLVLGTPRSGVQG). Position 43 is a phosphotyrosine (Y43). S81 is modified (phosphoserine). T124 carries the post-translational modification Phosphothreonine. S216 bears the Phosphoserine mark. N-linked (GlcNAc...) asparagine glycosylation occurs at N350. A disordered region spans residues 382-406 (EGEINTEDDDDDDDDDDDDDDDDDD).

It belongs to the calsequestrin family. In terms of assembly, monomer; increases in response to a depletion of intracellular calcium. Homodimer. Homotetramer and homopolymer. Can form linear homooligomers. Ca(2+) ions promote oligomerization. Interacts (via C-terminal end and preferentially with the monomeric form) with STIM1; this interaction increases in response to a depletion of intracellular calcium, decreases both STIM1 aggregation and clustering, interaction of STIM1 with ORAI1 and store-operated Ca(2+) entry (SOCE) activity. Interacts with ASPH and TRDN. Post-translationally, N-glycosylated. In terms of tissue distribution, detected in skeletal muscle and in smooth muscle from vas deferens, aorta and stomach (at protein level).

It is found in the endoplasmic reticulum. It localises to the sarcoplasmic reticulum. Its subcellular location is the sarcoplasmic reticulum lumen. The protein localises to the sarcoplasmic reticulum membrane. The protein resides in the mitochondrion matrix. Calsequestrin is a high-capacity, moderate affinity, calcium-binding protein and thus acts as an internal calcium store in muscle. Calcium ions are bound by clusters of acidic residues at the protein surface, often at the interface between subunits. Can bind around 80 Ca(2+) ions. Regulates the release of lumenal Ca(2+) via the calcium release channel RYR1; this plays an important role in triggering muscle contraction. Negatively regulates store-operated Ca(2+) entry (SOCE) activity. This chain is Calsequestrin-1 (Casq1), found in Rattus norvegicus (Rat).